We begin with the raw amino-acid sequence, 128 residues long: L-ectoine synthase (128 aa).

The protein belongs to the ectoine synthase family.

The enzyme catalyses (2S)-4-acetamido-2-aminobutanoate = L-ectoine + H2O. The protein operates within amine and polyamine biosynthesis; ectoine biosynthesis; L-ectoine from L-aspartate 4-semialdehyde: step 3/3. Catalyzes the circularization of gamma-N-acetyl-alpha,gamma-diaminobutyric acid (ADABA) to ectoine (1,4,5,6-tetrahydro-2-methyl-4-pyrimidine carboxylic acid), which is an excellent osmoprotectant. This is L-ectoine synthase from Vibrio atlanticus (strain LGP32) (Vibrio splendidus (strain Mel32)).